The primary structure comprises 351 residues: Histidinol-phosphate aminotransferase 2 (351 aa).

Lys-210 carries the post-translational modification N6-(pyridoxal phosphate)lysine.

The protein belongs to the class-II pyridoxal-phosphate-dependent aminotransferase family. Histidinol-phosphate aminotransferase subfamily. In terms of assembly, homodimer. Pyridoxal 5'-phosphate serves as cofactor.

The enzyme catalyses L-histidinol phosphate + 2-oxoglutarate = 3-(imidazol-4-yl)-2-oxopropyl phosphate + L-glutamate. It participates in amino-acid biosynthesis; L-histidine biosynthesis; L-histidine from 5-phospho-alpha-D-ribose 1-diphosphate: step 7/9. The protein is Histidinol-phosphate aminotransferase 2 (hisC2) of Rhizobium meliloti (strain 1021) (Ensifer meliloti).